The sequence spans 37 residues: Non-specific lipid-transfer protein (37 aa).

The protein belongs to the plant LTP family.

Its function is as follows. Plant non-specific lipid-transfer proteins transfer phospholipids as well as galactolipids across membranes. May play a role in wax or cutin deposition in the cell walls of expanding epidermal cells and certain secretory tissues. The polypeptide is Non-specific lipid-transfer protein (Artemisia vulgaris (Mugwort)).